Reading from the N-terminus, the 344-residue chain is GDSL esterase/lipase At1g73610 (344 aa).

Positions 1–24 (MNCLMFFKMLLAFSFISLFYVGNA) are cleaved as a signal peptide. A glycan (N-linked (GlcNAc...) asparagine) is linked at Asn-30. The active-site Nucleophile is the Ser-42. Catalysis depends on residues Asp-319 and His-322.

The protein belongs to the 'GDSL' lipolytic enzyme family.

It is found in the secreted. This chain is GDSL esterase/lipase At1g73610, found in Arabidopsis thaliana (Mouse-ear cress).